Here is a 248-residue protein sequence, read N- to C-terminus: Leucyl/phenylalanyl-tRNA--protein transferase (248 aa).

Belongs to the L/F-transferase family.

It localises to the cytoplasm. The enzyme catalyses N-terminal L-lysyl-[protein] + L-leucyl-tRNA(Leu) = N-terminal L-leucyl-L-lysyl-[protein] + tRNA(Leu) + H(+). The catalysed reaction is N-terminal L-arginyl-[protein] + L-leucyl-tRNA(Leu) = N-terminal L-leucyl-L-arginyl-[protein] + tRNA(Leu) + H(+). It carries out the reaction L-phenylalanyl-tRNA(Phe) + an N-terminal L-alpha-aminoacyl-[protein] = an N-terminal L-phenylalanyl-L-alpha-aminoacyl-[protein] + tRNA(Phe). Its function is as follows. Functions in the N-end rule pathway of protein degradation where it conjugates Leu, Phe and, less efficiently, Met from aminoacyl-tRNAs to the N-termini of proteins containing an N-terminal arginine or lysine. This chain is Leucyl/phenylalanyl-tRNA--protein transferase, found in Ralstonia pickettii (strain 12J).